The primary structure comprises 204 residues: Carbon disulfide hydrolase (204 aa).

Positions 35, 88, and 91 each coordinate Zn(2+).

Belongs to the beta-class carbonic anhydrase family. In terms of assembly, forms a hexadecameric catenane homooligomer, through interactions of two interlocked octameric rings. Exists as both octamers and hexadecamers in solution. It depends on Zn(2+) as a cofactor.

The catalysed reaction is carbon disulfide + 2 H2O = 2 hydrogen sulfide + CO2 + 2 H(+). It functions in the pathway sulfur metabolism; hydrogen sulfide biosynthesis. Catalyzes the conversion of carbon disulfide into hydrogen sulfide and carbon dioxide, with carbonyl sulfide as an intermediate. Likely plays a key role in sulfur metabolism that allows Acidianus sp. A1-3 to grow on carbon disulfide as the main carbon and energy source. Does not show carbonic anhydrase activity (hydration of CO(2) to carbonate). This chain is Carbon disulfide hydrolase, found in Acidianus sp. (strain A1-3).